Consider the following 699-residue polypeptide: Polyribonucleotide nucleotidyltransferase (699 aa).

Residues D485 and D491 each contribute to the Mg(2+) site. The KH domain maps to 552–611 (PRITTIKINPEKIRDVIGKGGAVIRALTEETGTTIELEDDGTVKIASSNGDATREAIRRI). The region spanning 621-689 (GRIYNGKVIR…RQGRVRLSIK (69 aa)) is the S1 motif domain.

The protein belongs to the polyribonucleotide nucleotidyltransferase family. As to quaternary structure, component of the RNA degradosome, which is a multiprotein complex involved in RNA processing and mRNA degradation. Mg(2+) serves as cofactor.

It localises to the cytoplasm. It carries out the reaction RNA(n+1) + phosphate = RNA(n) + a ribonucleoside 5'-diphosphate. In terms of biological role, involved in mRNA degradation. Catalyzes the phosphorolysis of single-stranded polyribonucleotides processively in the 3'- to 5'-direction. The sequence is that of Polyribonucleotide nucleotidyltransferase from Shewanella sp. (strain ANA-3).